Here is a 190-residue protein sequence, read N- to C-terminus: Protein GrpE (190 aa).

Residues 1–31 (MTETPNTSSEEIQTSEPSSDNELQTLQQENA) are compositionally biased toward polar residues. A disordered region spans residues 1–34 (MTETPNTSSEEIQTSEPSSDNELQTLQQENANLK).

The protein belongs to the GrpE family. In terms of assembly, homodimer.

It is found in the cytoplasm. Participates actively in the response to hyperosmotic and heat shock by preventing the aggregation of stress-denatured proteins, in association with DnaK and GrpE. It is the nucleotide exchange factor for DnaK and may function as a thermosensor. Unfolded proteins bind initially to DnaJ; upon interaction with the DnaJ-bound protein, DnaK hydrolyzes its bound ATP, resulting in the formation of a stable complex. GrpE releases ADP from DnaK; ATP binding to DnaK triggers the release of the substrate protein, thus completing the reaction cycle. Several rounds of ATP-dependent interactions between DnaJ, DnaK and GrpE are required for fully efficient folding. This chain is Protein GrpE, found in Chlamydia muridarum (strain MoPn / Nigg).